The chain runs to 74 residues: Serine rich endogenous peptide 16 (74 aa).

An N-terminal signal peptide occupies residues 1–31 (MATKISHLVSLLLSLLLLLLFISSQVGFTEA). Residues 29–74 (TEAKRDERKKMSSPPIPSPLIPSPPIPPPPPRFYVPPSKSRRGKGP) are disordered. Residues 42 to 62 (PPIPSPLIPSPPIPPPPPRFY) are compositionally biased toward pro residues. The SCOOP motif signature appears at 60 to 74 (RFYVPPSKSRRGKGP). A SxS motif essential for MIK2 binding motif is present at residues 66–68 (SKS).

Belongs to the serine rich endogenous peptide (SCOOP) phytocytokine family. Interacts with MIK2 (via extracellular leucine-rich repeat domain); this interaction triggers the formation of complex between MIK2 and the BAK1/SERK3 and SERK4 coreceptors, and subsequent BAK1 activation by phosphorylation.

Its subcellular location is the cell membrane. The protein resides in the secreted. The protein localises to the extracellular space. It localises to the apoplast. Functionally, brassicaceae-specific phytocytokine (plant endogenous peptide released into the apoplast) perceived by MIK2 in a BAK1/SERK3 and SERK4 coreceptors-dependent manner, that modulates various physiological and antimicrobial processes including growth prevention and reactive oxygen species (ROS) response regulation. The protein is Serine rich endogenous peptide 16 of Arabidopsis thaliana (Mouse-ear cress).